Consider the following 405-residue polypeptide: Polyadenylate-binding protein RBP45B (405 aa).

The segment covering 1-19 (MMQQPPPGGILPHHAPPPS) has biased composition (pro residues). The tract at residues 1–54 (MMQQPPPGGILPHHAPPPSAQQQYGYQQPYGIAGAAPPPPQMWNPQAAAPPSVQ) is disordered. Residues 20–35 (AQQQYGYQQPYGIAGA) are compositionally biased toward low complexity. 3 consecutive RRM domains span residues 62-143 (RTLW…WASL), 155-234 (YTIF…PAAS), and 261-333 (TTVF…WGRS). The interval 379–405 (GGYQQTPQAGQQPPQQPPQQQQVGFSY) is disordered. Over residues 380-405 (GYQQTPQAGQQPPQQPPQQQQVGFSY) the composition is skewed to low complexity.

This sequence belongs to the polyadenylate-binding RBP45 family. Both isoform 1 and isoform 2 interact with poly(A)+ RNA in nucleus. Expressed in roots, leaves, stems, flowers, siliques, and seedlings. Present in immature anther tissues (tapetum cells) and mature pollen grains.

It localises to the nucleus. Its function is as follows. Heterogeneous nuclear ribonucleoprotein (hnRNP)-protein binding the poly(A) tail of mRNA and probably involved in some steps of pre-mRNA maturation. This Arabidopsis thaliana (Mouse-ear cress) protein is Polyadenylate-binding protein RBP45B (RBP45B).